We begin with the raw amino-acid sequence, 157 residues long: Transcription elongation factor GreA (157 aa).

It belongs to the GreA/GreB family.

Its function is as follows. Necessary for efficient RNA polymerase transcription elongation past template-encoded arresting sites. The arresting sites in DNA have the property of trapping a certain fraction of elongating RNA polymerases that pass through, resulting in locked ternary complexes. Cleavage of the nascent transcript by cleavage factors such as GreA or GreB allows the resumption of elongation from the new 3'terminus. GreA releases sequences of 2 to 3 nucleotides. This chain is Transcription elongation factor GreA, found in Bartonella tribocorum (strain CIP 105476 / IBS 506).